The chain runs to 79 residues: Small ribosomal subunit protein bS16 (79 aa).

Belongs to the bacterial ribosomal protein bS16 family.

This Marinobacter nauticus (strain ATCC 700491 / DSM 11845 / VT8) (Marinobacter aquaeolei) protein is Small ribosomal subunit protein bS16.